A 322-amino-acid polypeptide reads, in one-letter code: Ribosomal RNA small subunit methyltransferase H (322 aa).

Residues 47–49 (GGH), D67, F93, D112, and Q119 contribute to the S-adenosyl-L-methionine site.

Belongs to the methyltransferase superfamily. RsmH family.

It localises to the cytoplasm. The enzyme catalyses cytidine(1402) in 16S rRNA + S-adenosyl-L-methionine = N(4)-methylcytidine(1402) in 16S rRNA + S-adenosyl-L-homocysteine + H(+). Functionally, specifically methylates the N4 position of cytidine in position 1402 (C1402) of 16S rRNA. This chain is Ribosomal RNA small subunit methyltransferase H, found in Stenotrophomonas maltophilia (strain K279a).